We begin with the raw amino-acid sequence, 192 residues long: GTP-dependent dephospho-CoA kinase (192 aa).

6 residues coordinate GTP: Asp-49, Val-50, Val-51, Asp-68, Lys-70, and Glu-127.

Belongs to the GTP-dependent DPCK family.

It carries out the reaction 3'-dephospho-CoA + GTP = GDP + CoA + H(+). The protein operates within cofactor biosynthesis; coenzyme A biosynthesis. In terms of biological role, catalyzes the GTP-dependent phosphorylation of the 3'-hydroxyl group of dephosphocoenzyme A to form coenzyme A (CoA). The chain is GTP-dependent dephospho-CoA kinase from Halorubrum lacusprofundi (strain ATCC 49239 / DSM 5036 / JCM 8891 / ACAM 34).